Reading from the N-terminus, the 90-residue chain is DNA-binding protein HU-alpha (90 aa).

This sequence belongs to the bacterial histone-like protein family. In terms of assembly, heterodimer of an alpha and a beta chain.

In terms of biological role, histone-like DNA-binding protein which is capable of wrapping DNA to stabilize it, and thus to prevent its denaturation under extreme environmental conditions. The chain is DNA-binding protein HU-alpha (hupA) from Serratia marcescens.